Here is a 445-residue protein sequence, read N- to C-terminus: Maltoporin (445 aa).

An N-terminal signal peptide occupies residues 1-24 (MITLRKLPLAVAVAAGVMSAQAMA).

Belongs to the porin LamB (TC 1.B.3) family. Homotrimer formed of three 18-stranded antiparallel beta-barrels, containing three independent channels.

The protein resides in the cell outer membrane. It catalyses the reaction beta-maltose(in) = beta-maltose(out). In terms of biological role, involved in the transport of maltose and maltodextrins. This Shigella flexneri protein is Maltoporin.